A 287-amino-acid polypeptide reads, in one-letter code: Undecaprenyl-diphosphatase (287 aa).

The next 6 membrane-spanning stretches (helical) occupy residues 50 to 70 (PGVS…IAYF), 99 to 119 (IAMA…KLFW), 128 to 148 (LRSV…LAVA), 206 to 226 (FLLG…DALA), 231 to 251 (AGPL…WLAI), and 263 to 283 (TWLF…WWSI).

Belongs to the UppP family.

It is found in the cell inner membrane. The enzyme catalyses di-trans,octa-cis-undecaprenyl diphosphate + H2O = di-trans,octa-cis-undecaprenyl phosphate + phosphate + H(+). Catalyzes the dephosphorylation of undecaprenyl diphosphate (UPP). Confers resistance to bacitracin. The sequence is that of Undecaprenyl-diphosphatase from Parasynechococcus marenigrum (strain WH8102).